Consider the following 205-residue polypeptide: Thymidylate kinase (205 aa).

11–18 (GPEGSGKT) provides a ligand contact to ATP.

Belongs to the thymidylate kinase family.

The catalysed reaction is dTMP + ATP = dTDP + ADP. Its function is as follows. Phosphorylation of dTMP to form dTDP in both de novo and salvage pathways of dTTP synthesis. The protein is Thymidylate kinase of Clostridium novyi (strain NT).